A 362-amino-acid chain; its full sequence is Peptide chain release factor 1 (362 aa).

Gln-237 carries the post-translational modification N5-methylglutamine.

It belongs to the prokaryotic/mitochondrial release factor family. Post-translationally, methylated by PrmC. Methylation increases the termination efficiency of RF1.

Its subcellular location is the cytoplasm. Peptide chain release factor 1 directs the termination of translation in response to the peptide chain termination codons UAG and UAA. The sequence is that of Peptide chain release factor 1 from Vibrio parahaemolyticus serotype O3:K6 (strain RIMD 2210633).